The chain runs to 190 residues: Cathelicidin-3 (190 aa).

Residues 1 to 29 (METQMASPSLGRCSLWLLLLGLLLPSASA) form the signal peptide. Q30 is modified (pyrrolidone carboxylic acid). Residues 30–130 (QALSYREAVL…DLNCNELQSV (101 aa)) constitute a propeptide that is removed on maturation. 2 disulfide bridges follow: C85/C96 and C107/C124. A compositionally biased stretch (basic residues) spans 133–151 (LRPRRPRLPRPRPRPRPRP). Residues 133–190 (LRPRRPRLPRPRPRPRPRPRSLPLPRPQPRRIPRPILLPWRPPRPIPRPQPQPIPRWL) form a disordered region. The span at 172 to 190 (WRPPRPIPRPQPQPIPRWL) shows a compositional bias: pro residues.

Belongs to the cathelicidin family.

Its subcellular location is the secreted. In terms of biological role, exerts, in vitro, a potent antimicrobial activity. Probably due to an impairment of the function of the respiratory chain and of energy-dependent activities in the inner membrane of susceptible microorganisms. This chain is Cathelicidin-3 (CATHL3), found in Ovis aries (Sheep).